We begin with the raw amino-acid sequence, 179 residues long: Apolipophorin-3b (179 aa).

The N-terminal stretch at 1–16 (MNTLLAVLMLAVAAQA) is a signal peptide. 12 repeats span residues 30-40 (VQQLNHTIVNA), 41-52 (AHELHETLGLPT), 53-60 (PDEALNLL), 61-78 (TEQA…TTSL), 79-89 (KQEAEKHQGSV), 90-99 (AEQLNRFARN), 100-113 (LNNS…SAQP), 114-127 (ADQL…LTNV), 128-140 (GHQW…RPSV), 141-151 (AQEAWAPVQSA), 152-165 (LQEA…AAAN), and 166-179 (LQNS…KPAN). An N-linked (GlcNAc...) asparagine glycan is attached at Asn-34. The N-linked (GlcNAc...) asparagine glycan is linked to Asn-101. The interval 152-179 (LQEAAEKTKEAAANLQNSIQSAVQKPAN) is disordered. Residues 165 to 179 (NLQNSIQSAVQKPAN) are compositionally biased toward polar residues.

This sequence belongs to the insect apolipophorin-3 family. In terms of assembly, equilibrium between a soluble monomer and a bound lipoprotein form. Apolipophorin-3 associates with lipophorin during lipid loading until each particle contains 14 molecules of apolipophorin-3 in L.migratoria (5 molecules of apolipophorin-3a and 9 of apolipophorin-3b). In terms of tissue distribution, hemolymph.

It localises to the secreted. Functionally, assists in the loading of diacylglycerol, generated from triacylglycerol stores in the fat body through the action of adipokinetic hormone, into lipophorin, the hemolymph lipoprotein. It increases the lipid carrying capacity of lipophorin by covering the expanding hydrophobic surface resulting from diacylglycerol uptake. It thus plays a critical role in the transport of lipids during flight in several species of insects. This chain is Apolipophorin-3b, found in Locusta migratoria (Migratory locust).